The following is a 190-amino-acid chain: NADH-quinone oxidoreductase subunit B (190 aa).

4 residues coordinate [4Fe-4S] cluster: Cys67, Cys68, Cys132, and Cys162.

Belongs to the complex I 20 kDa subunit family. As to quaternary structure, NDH-1 is composed of 14 different subunits. Subunits NuoB, C, D, E, F, and G constitute the peripheral sector of the complex. It depends on [4Fe-4S] cluster as a cofactor.

The protein localises to the cell inner membrane. It catalyses the reaction a quinone + NADH + 5 H(+)(in) = a quinol + NAD(+) + 4 H(+)(out). Functionally, NDH-1 shuttles electrons from NADH, via FMN and iron-sulfur (Fe-S) centers, to quinones in the respiratory chain. The immediate electron acceptor for the enzyme in this species is believed to be ubiquinone. Couples the redox reaction to proton translocation (for every two electrons transferred, four hydrogen ions are translocated across the cytoplasmic membrane), and thus conserves the redox energy in a proton gradient. In Anaplasma marginale (strain Florida), this protein is NADH-quinone oxidoreductase subunit B.